Reading from the N-terminus, the 526-residue chain is Serine/threonine-protein kinase ppk22 (526 aa).

2 disordered regions span residues 1–24 and 39–106; these read MARE…QSHF and AATV…PRPL. Over residues 10–23 the composition is skewed to polar residues; that stretch reads KSPSSTDDGMSQSH. A compositionally biased stretch (low complexity) spans 65 to 78; sequence NQLNELDLNDSSDQ. Ser-154 carries the post-translational modification Phosphoserine. A Protein kinase domain is found at 155-445; sequence FEKIRLLGQG…ASDIKQHPFF (291 aa). ATP is bound by residues 161-169 and Lys-184; that span reads LGQGDVGKV. Asp-280 functions as the Proton acceptor in the catalytic mechanism. Phosphothreonine is present on Thr-339. A Phosphoserine modification is found at Ser-341. Tyr-348 is subject to Phosphotyrosine. Residues 446-526 form the AGC-kinase C-terminal domain; the sequence is RHIQWALLRS…SVTLHHAGDE (81 aa). The tract at residues 499-526 is disordered; sequence MHSSTPVNEQSNPFDSFSSVTLHHAGDE. Polar residues predominate over residues 500 to 519; it reads HSSTPVNEQSNPFDSFSSVT.

This sequence belongs to the protein kinase superfamily. AGC Ser/Thr protein kinase family.

It localises to the cytoplasm. The enzyme catalyses L-seryl-[protein] + ATP = O-phospho-L-seryl-[protein] + ADP + H(+). It carries out the reaction L-threonyl-[protein] + ATP = O-phospho-L-threonyl-[protein] + ADP + H(+). This Schizosaccharomyces pombe (strain 972 / ATCC 24843) (Fission yeast) protein is Serine/threonine-protein kinase ppk22 (ppk22).